The following is a 487-amino-acid chain: Calcium-binding tyrosine phosphorylation-regulated protein (487 aa).

In terms of domain architecture, RIIa spans 12 to 49 (YGLKTLLEGISRAVLKTNPSDINQFAAAYFQELTMYRG). Composition is skewed to basic and acidic residues over residues 78–91 (KKLECLKEPEKTSV) and 101–117 (KSTDTDEDNVTRTEYSD). Disordered stretches follow at residues 78–163 (KKLE…AVSP), 243–271 (VDLGSQPKENEAEQSTASSVPLQDEQEPP), and 420–487 (IVSD…ATAE). Low complexity predominate over residues 140–152 (SSSKPATPKATTP). Composition is skewed to polar residues over residues 420-436 (IVSDNTGQEESGENSVP) and 455-464 (SGTSVKSSSG). Residues 478–487 (IEPEGEATAE) are compositionally biased toward acidic residues.

In terms of assembly, interacts with FSCB. In terms of processing, phosphorylated on tyrosine residues during in vitro capacitation. Dephosphorylation affects its ability to bind calcium.

Its subcellular location is the cytoplasm. The protein resides in the cytoskeleton. The protein localises to the cell projection. It localises to the cilium. It is found in the flagellum. In terms of biological role, may function as a regulator of both motility- and head-associated functions such as capacitation and the acrosome reaction. May bind calcium in vitro. This is Calcium-binding tyrosine phosphorylation-regulated protein (CABYR) from Macaca fascicularis (Crab-eating macaque).